We begin with the raw amino-acid sequence, 94 residues long: uncharacterized protein (94 aa).

The protein belongs to the phage portal family. HK97 subfamily.

This is an uncharacterized protein from Rickettsia conorii (strain ATCC VR-613 / Malish 7).